A 354-amino-acid polypeptide reads, in one-letter code: tRNA-specific 2-thiouridylase MnmA (354 aa).

ATP-binding positions include Ala-7 to Ser-14 and Met-33. Cys-94 serves as the catalytic Nucleophile. A disulfide bridge links Cys-94 with Cys-192. Position 118 (Gly-118) interacts with ATP. An interaction with tRNA region spans residues Lys-141–Gln-143. The Cysteine persulfide intermediate role is filled by Cys-192. Residues Arg-296–Tyr-297 are interaction with tRNA.

It belongs to the MnmA/TRMU family.

The protein resides in the cytoplasm. It carries out the reaction S-sulfanyl-L-cysteinyl-[protein] + uridine(34) in tRNA + AH2 + ATP = 2-thiouridine(34) in tRNA + L-cysteinyl-[protein] + A + AMP + diphosphate + H(+). Functionally, catalyzes the 2-thiolation of uridine at the wobble position (U34) of tRNA, leading to the formation of s(2)U34. The protein is tRNA-specific 2-thiouridylase MnmA of Trichlorobacter lovleyi (strain ATCC BAA-1151 / DSM 17278 / SZ) (Geobacter lovleyi).